A 1067-amino-acid chain; its full sequence is Tricorn protease homolog 1 (1067 aa).

A disordered region spans residues 518–551 (TTPSPFGPQRHGRPFETPDREETPDSEGTPTTRI). Over residues 530 to 540 (RPFETPDREET) the composition is skewed to basic and acidic residues. H740 serves as the catalytic Charge relay system. The tract at residues 754 to 851 (RQGLLGADLS…HAVVVPLADE (98 aa)) is PDZ-like. G914 is a binding site for substrate. The Nucleophile role is filled by S961. E1019 functions as the Charge relay system in the catalytic mechanism.

The protein belongs to the peptidase S41B family. Forms a homohexameric complex; it is not known if it assembles into higher-order structures.

Its subcellular location is the cytoplasm. Its activity is regulated as follows. Stimulated by MgCl2. In terms of biological role, degrades oligopeptides in a sequential manner. This is Tricorn protease homolog 1 (tri1) from Streptomyces coelicolor (strain ATCC BAA-471 / A3(2) / M145).